The following is a 78-amino-acid chain: DNA-directed RNA polymerase subunit Rpo5 (78 aa).

It belongs to the archaeal Rpo5/eukaryotic RPB5 RNA polymerase subunit family. In terms of assembly, part of the RNA polymerase complex.

Its subcellular location is the cytoplasm. The enzyme catalyses RNA(n) + a ribonucleoside 5'-triphosphate = RNA(n+1) + diphosphate. Its function is as follows. DNA-dependent RNA polymerase (RNAP) catalyzes the transcription of DNA into RNA using the four ribonucleoside triphosphates as substrates. In Methanococcus maripaludis (strain C7 / ATCC BAA-1331), this protein is DNA-directed RNA polymerase subunit Rpo5.